A 426-amino-acid chain; its full sequence is D-amino acid dehydrogenase (426 aa).

An FAD-binding site is contributed by Val3–Trp17.

It belongs to the DadA oxidoreductase family. FAD is required as a cofactor.

The catalysed reaction is a D-alpha-amino acid + A + H2O = a 2-oxocarboxylate + AH2 + NH4(+). The protein operates within amino-acid degradation; D-alanine degradation; NH(3) and pyruvate from D-alanine: step 1/1. Its function is as follows. Oxidative deamination of D-amino acids. This chain is D-amino acid dehydrogenase, found in Phenylobacterium zucineum (strain HLK1).